We begin with the raw amino-acid sequence, 1305 residues long: Junctional cadherin 5-associated protein (1305 aa).

Disordered stretches follow at residues 13–86 (YKLS…PSTA), 120–151 (REQE…VGGR), 249–419 (GVPK…HTTA), 450–545 (KLDG…CEMQ), 575–604 (IPVK…EQSV), 616–795 (ALTG…SRQL), and 818–1005 (FNKE…GLSA). Composition is skewed to basic and acidic residues over residues 21–31 (APHEDDGERRQ), 69–82 (PESR…HGER), 120–129 (REQEAREDPG), and 140–151 (HPREGPWEVGGR). Residues 337-358 (GLEPPVYVPPPSYKSPPQPAAH) are compositionally biased toward pro residues. Positions 360–369 (CPEEAVSRHE) are enriched in basic and acidic residues. Composition is skewed to polar residues over residues 530-545 (LVSS…CEMQ) and 579-594 (SESQ…NDLK). Residues 595 to 604 (QSASLQEQSV) show a composition bias toward low complexity. Over residues 669–683 (QQTQTSFAHEPQSLQ) the composition is skewed to polar residues. The span at 729–748 (SPKSQGSLSPSSNSAFSGSS) shows a compositional bias: low complexity. Ser-841 carries the phosphoserine modification. Composition is skewed to basic and acidic residues over residues 878–889 (SKSESWSEEGRP) and 945–958 (AKPE…EQRE). Residues Ser-1004, Ser-1010, Ser-1152, and Ser-1239 each carry the phosphoserine modification. Disordered regions lie at residues 1062–1166 (GAQR…DVET) and 1234–1305 (SRAA…VERV). Residues 1276 to 1288 (ADGHPAARRENGG) show a composition bias toward basic and acidic residues.

It localises to the cell junction. Its subcellular location is the adherens junction. This chain is Junctional cadherin 5-associated protein (JCAD), found in Bos taurus (Bovine).